The following is a 514-amino-acid chain: Nucleus accumbens-associated protein 1 (514 aa).

In terms of domain architecture, BTB spans 30-94 (CDVSVVVKGH…CYTGRLSMNM (65 aa)). A Glycyl lysine isopeptide (Lys-Gly) (interchain with G-Cter in SUMO1); alternate cross-link involves residue lysine 167. Lysine 167 is covalently cross-linked (Glycyl lysine isopeptide (Lys-Gly) (interchain with G-Cter in SUMO2); alternate). A Glycyl lysine isopeptide (Lys-Gly) (interchain with G-Cter in SUMO2) cross-link involves residue lysine 182. Disordered regions lie at residues 183-205 (RLWD…RKMA) and 242-279 (PSMS…EEGT). Serine 187 carries the post-translational modification Phosphoserine. Over residues 242-251 (PSMSERTSPG) the composition is skewed to polar residues. Serine 245 is modified (phosphoserine; by PKC). Residues 252-264 (TSSAYTSDSPSSY) show a composition bias toward low complexity. Acidic residues predominate over residues 267 to 279 (EEDEEEDAGEEGT). Residues lysine 304, lysine 438, lysine 466, and lysine 485 each participate in a glycyl lysine isopeptide (Lys-Gly) (interchain with G-Cter in SUMO2) cross-link. The region spanning 360–457 (GTNVYITRAQ…DMCTNARRVV (98 aa)) is the BEN domain. Phosphoserine is present on residues serine 492 and serine 496.

Homooligomer; mediated by the BTB domain. Interacts with HDAC3 and HDAC4. Interacts (via BTB domain) with CUL3, PSMD7 and RCOR1. Ubiquitously expressed with higher expression in the brain, kidney and liver, and at lower levels in heart, lung and testes.

Its subcellular location is the nucleus. It localises to the cytoplasm. Functions as a transcriptional repressor. Seems to function as a transcriptional corepressor in neuronal cells through recruitment of HDAC3 and HDAC4. Contributes to tumor progression, and tumor cell proliferation and survival. This may be mediated at least in part through repressing transcriptional activity of GADD45GIP1. Required for recruiting the proteasome from the nucleus to the cytoplasm and dendritic spines. Involved in the acute behavioral and neurological responses to cocaine and amphetamines. The protein is Nucleus accumbens-associated protein 1 (Nacc1) of Mus musculus (Mouse).